The primary structure comprises 228 residues: N-acylneuraminate cytidylyltransferase (228 aa).

This sequence belongs to the CMP-NeuNAc synthase family.

It localises to the cytoplasm. It carries out the reaction an N-acylneuraminate + CTP = a CMP-N-acyl-beta-neuraminate + diphosphate. The sequence is that of N-acylneuraminate cytidylyltransferase (neuA) from Neisseria meningitidis serogroup B (strain ATCC BAA-335 / MC58).